Here is a 218-residue protein sequence, read N- to C-terminus: Dual specificity protein phosphatase TpbA (218 aa).

The first 28 residues, 1–28 (MHRSPLAWLRLLLAAVLGAFLLGGPLHA), serve as a signal peptide directing secretion. Positions 44 to 188 (DPSINLYRMS…YVRGADVDGL (145 aa)) constitute a Tyrosine-protein phosphatase domain. Aspartate 105 functions as the Proton donor/acceptor in the catalytic mechanism. The active-site Phosphocysteine intermediate is the cysteine 132.

This sequence belongs to the protein-tyrosine phosphatase family.

It localises to the periplasm. It catalyses the reaction O-phospho-L-tyrosyl-[protein] + H2O = L-tyrosyl-[protein] + phosphate. The catalysed reaction is O-phospho-L-threonyl-[protein] + H2O = L-threonyl-[protein] + phosphate. It carries out the reaction O-phospho-L-seryl-[protein] + H2O = L-seryl-[protein] + phosphate. Phosphatase that regulates diverse phenotypes in P.aeruginosa via regulation of the concentration of cellular c-di-GMP. Acts by dephosphorylating the membrane-anchored diguanylate cyclase TpbB at tyrosine and serine/threonine sites, leading to inactivation of TpbB and reduced c-di-GMP production. In vitro shows phosphatase activity toward p-nitrophenyl phosphate (pNPP) and tyrosine phosphopeptides. Can efficiently dephosphorylate two phosphorylated peptides derived from the periplasmic domain of TpbB, with a strong preference for Tyr-48 over Tyr-62. The protein is Dual specificity protein phosphatase TpbA of Pseudomonas aeruginosa (strain ATCC 15692 / DSM 22644 / CIP 104116 / JCM 14847 / LMG 12228 / 1C / PRS 101 / PAO1).